The sequence spans 258 residues: Alpha-fibrinogenase (258 aa).

The signal sequence occupies residues 1–18 (MVLIRVLANLVMLHLSYG). Residues 19–24 (EKSSEL) constitute a propeptide that is removed on maturation. The Peptidase S1 domain maps to 25–249 (VIGGRPCNIN…YNDWIQSIIA (225 aa)). Cystine bridges form between cysteine 31–cysteine 163, cysteine 50–cysteine 66, cysteine 98–cysteine 256, cysteine 142–cysteine 210, cysteine 174–cysteine 189, and cysteine 200–cysteine 225. Asparagine 44 is a glycosylation site (N-linked (GlcNAc...) asparagine). Catalysis depends on histidine 65, which acts as the Charge relay system. Asparagine 79 and asparagine 101 each carry an N-linked (GlcNAc...) asparagine glycan. The active-site Charge relay system is the aspartate 110. Residue serine 204 is the Charge relay system of the active site.

This sequence belongs to the peptidase S1 family. Snake venom subfamily. In terms of assembly, monomer. Glycosylated. Contains 8.5% of hexoses, 5.8% of hexosamines and 0.8% of sialic acids. In terms of tissue distribution, expressed by the venom gland.

It is found in the secreted. Inhibited by diisopropylfluorophosphate (DFP) and PMSF, and partially by soybean trypsin inhibitor, but not by EDTA. Degrades alpha chain of fibrinogen (FGA), and has strong caseinolytic activity. Cleaves oxidized insulin B-chain at '40-Tyr-|-Leu-41', '48-Phe-|-Phe-49' and '49-Phe-|-Tyr-50', and glucagon at the bonds '62-Tyr-|-Ser-63', 66-Leu-|-Asp-67' and '78-Leu-|-Met-79' bonds. The protein is Alpha-fibrinogenase of Macrovipera lebetinus (Levantine viper).